The following is a 95-amino-acid chain: Large ribosomal subunit protein bL28 (95 aa).

The disordered stretch occupies residues 1 to 22; that stretch reads MSRRCELTGKGPMTGNNVSHAN.

Belongs to the bacterial ribosomal protein bL28 family.

The polypeptide is Large ribosomal subunit protein bL28 (Ruegeria pomeroyi (strain ATCC 700808 / DSM 15171 / DSS-3) (Silicibacter pomeroyi)).